Reading from the N-terminus, the 406-residue chain is Glutamyl-tRNA reductase (406 aa).

Substrate is bound by residues 49-52 (TCHR), S107, 112-114 (EPQ), and Q118. The active-site Nucleophile is the C50. Residue 187–192 (GAGETG) coordinates NADP(+).

The protein belongs to the glutamyl-tRNA reductase family. Homodimer.

The enzyme catalyses (S)-4-amino-5-oxopentanoate + tRNA(Glu) + NADP(+) = L-glutamyl-tRNA(Glu) + NADPH + H(+). The protein operates within porphyrin-containing compound metabolism; protoporphyrin-IX biosynthesis; 5-aminolevulinate from L-glutamyl-tRNA(Glu): step 1/2. Functionally, catalyzes the NADPH-dependent reduction of glutamyl-tRNA(Glu) to glutamate 1-semialdehyde (GSA). The protein is Glutamyl-tRNA reductase of Thermomicrobium roseum (strain ATCC 27502 / DSM 5159 / P-2).